An 800-amino-acid polypeptide reads, in one-letter code: DNA topoisomerase 1 (800 aa).

One can recognise a Toprim domain in the interval 1–111 (MKLVIVESPA…VKSDDFFKRV (111 aa)). The Mg(2+) site is built by E7 and D80. Residues 132–568 (DNNLVNAQQA…FWNGFNHNIE (437 aa)) form the Topo IA-type catalytic domain. The interval 166-171 (SAGRVQ) is interaction with DNA. The active-site O-(5'-phospho-DNA)-tyrosine intermediate is Y304. The C4-type zinc finger occupies 600–627 (CPSCKTGELSLKLGKFGAFLACSNYPEC).

It belongs to the type IA topoisomerase family. Monomer. Requires Mg(2+) as cofactor.

The catalysed reaction is ATP-independent breakage of single-stranded DNA, followed by passage and rejoining.. In terms of biological role, releases the supercoiling and torsional tension of DNA, which is introduced during the DNA replication and transcription, by transiently cleaving and rejoining one strand of the DNA duplex. Introduces a single-strand break via transesterification at a target site in duplex DNA. The scissile phosphodiester is attacked by the catalytic tyrosine of the enzyme, resulting in the formation of a DNA-(5'-phosphotyrosyl)-enzyme intermediate and the expulsion of a 3'-OH DNA strand. The free DNA strand then undergoes passage around the unbroken strand, thus removing DNA supercoils. Finally, in the religation step, the DNA 3'-OH attacks the covalent intermediate to expel the active-site tyrosine and restore the DNA phosphodiester backbone. This chain is DNA topoisomerase 1, found in Rickettsia bellii (strain RML369-C).